The chain runs to 159 residues: UPF0336 protein MAP_4107 (159 aa).

The protein belongs to the UPF0336 family.

The protein is UPF0336 protein MAP_4107 of Mycolicibacterium paratuberculosis (strain ATCC BAA-968 / K-10) (Mycobacterium paratuberculosis).